The chain runs to 281 residues: Probable endonuclease 4 (281 aa).

Residues His69, His109, Glu145, Asp179, His182, His216, Asp229, His231, and Glu261 each contribute to the Zn(2+) site.

This sequence belongs to the AP endonuclease 2 family. Zn(2+) is required as a cofactor.

It carries out the reaction Endonucleolytic cleavage to 5'-phosphooligonucleotide end-products.. Endonuclease IV plays a role in DNA repair. It cleaves phosphodiester bonds at apurinic or apyrimidinic (AP) sites, generating a 3'-hydroxyl group and a 5'-terminal sugar phosphate. The sequence is that of Probable endonuclease 4 from Chlorobaculum tepidum (strain ATCC 49652 / DSM 12025 / NBRC 103806 / TLS) (Chlorobium tepidum).